The sequence spans 923 residues: MSSGSTIVSSDKSGRTFKHEEELPKLPLPKLCDTLQRLKESLEPLYYADGYYQHPLDPEQIEKLSSIIRDFEENPVSEKLQSKLQSYHDTRDCYLDELHLDINNQTSTREIQDDVLPRNPFLVLADDALPNITQADRSAVLVHSAARFISALKQDLLPPDINATNGKPLSMAPFLNLFGTTRSPVFQRGEVENFDLNKPYTASDLEDPDYSSDEDDNDEPTQKDFDDRKRKHEEDIFTGNGITIKRHPDSKHILIISRGQYYTLEVLDSTNKIIYTAAELTTIFNHIIKDSSGIEKSTALGSLTSHSFRNWKYARKRLQKRYPNELHRIDSALFVLVLDESQEETTNDGDDTADISQMFNRTITERDKKCTSANCKRVFYGTSIINSKGHQVGSCVSRWYDKLQLVVTADAKATVIWDSFTCDGSVVLRFTSEIYTESVLRLARDVNAGDPQFSLWPNVTQMDPETKKLMTATISADGGGPSEIDPKLVVNKIDWSFSNILNTHVHLSETKLADLISKYDIVRASIPLGRRSAQRLGVKPDSMVQVALQIAHYALYGRMVFGLEPVSTRGFKNSRSSFINIQSQALLELCQLFISSSIDGTDKLDKFIQTCETHNNMVKHAKSGVGYEKHFNALKYLFKFHDHFGIHLSGDESSAAKDLFENPLVLPFSQPELIVANCGNAATTTFGITPAVPHGFGIGYIIKDDQVDLTVTSQFRQGDRLMFMLSWVLGEIRSYWRMSRGTSHNKTGVKISPVVDKLYEMDNAVNNPPKRNGHTVNGSRKTSSSSQVNLNRYGGFFDLEGHIDSRNISKTPSMKNLQKTFNGLTMSADNDHSSSAVSVPTEKEKLNTGHEILQIQPREVASNGLEADDETDIEIVAGNADGTSSSASSATSLNSKKRNVINSRFDIDFDRSRVGRKVATLDQ.

Over residues 1 to 11 (MSSGSTIVSSD) the composition is skewed to polar residues. Disordered stretches follow at residues 1–21 (MSSG…KHEE) and 197–232 (NKPY…KRKH). Ser2 bears the N-acetylserine mark. Residues 12–21 (KSGRTFKHEE) show a composition bias toward basic and acidic residues. Residues 204–219 (DLEDPDYSSDEDDNDE) show a composition bias toward acidic residues. Residues 220–232 (PTQKDFDDRKRKH) are compositionally biased toward basic and acidic residues. CoA is bound by residues 529-541 (GRRS…VKPD) and Ser567. Ser576 contacts (R)-carnitine. The interval 763-787 (NAVNNPPKRNGHTVNGSRKTSSSSQ) is disordered. Positions 774-787 (HTVNGSRKTSSSSQ) are enriched in polar residues. The residue at position 783 (Ser783) is a Phosphoserine.

The protein belongs to the carnitine/choline acetyltransferase family.

It is found in the cytoplasm. It catalyses the reaction (R)-carnitine + acetyl-CoA = O-acetyl-(R)-carnitine + CoA. Carnitine O-acetyltransferase involved in the shutteling of acetyl-CoA in the cell. The sequence is that of Carnitine O-acetyltransferase YAT2 from Saccharomyces cerevisiae (strain ATCC 204508 / S288c) (Baker's yeast).